Here is a 493-residue protein sequence, read N- to C-terminus: Glutamyl-tRNA(Gln) amidotransferase subunit A (493 aa).

Active-site charge relay system residues include Lys-78 and Ser-158. Ser-182 acts as the Acyl-ester intermediate in catalysis.

This sequence belongs to the amidase family. GatA subfamily. As to quaternary structure, heterotrimer of A, B and C subunits.

The catalysed reaction is L-glutamyl-tRNA(Gln) + L-glutamine + ATP + H2O = L-glutaminyl-tRNA(Gln) + L-glutamate + ADP + phosphate + H(+). Allows the formation of correctly charged Gln-tRNA(Gln) through the transamidation of misacylated Glu-tRNA(Gln) in organisms which lack glutaminyl-tRNA synthetase. The reaction takes place in the presence of glutamine and ATP through an activated gamma-phospho-Glu-tRNA(Gln). The chain is Glutamyl-tRNA(Gln) amidotransferase subunit A from Rickettsia bellii (strain RML369-C).